Here is a 279-residue protein sequence, read N- to C-terminus: 3-methyl-2-oxobutanoate hydroxymethyltransferase (279 aa).

D43 and D82 together coordinate Mg(2+). 3-methyl-2-oxobutanoate is bound by residues 43–44 (DS), D82, and K112. A Mg(2+)-binding site is contributed by E114. E181 functions as the Proton acceptor in the catalytic mechanism.

This sequence belongs to the PanB family. As to quaternary structure, homodecamer; pentamer of dimers. Requires Mg(2+) as cofactor.

It is found in the cytoplasm. The enzyme catalyses 3-methyl-2-oxobutanoate + (6R)-5,10-methylene-5,6,7,8-tetrahydrofolate + H2O = 2-dehydropantoate + (6S)-5,6,7,8-tetrahydrofolate. It functions in the pathway cofactor biosynthesis; (R)-pantothenate biosynthesis; (R)-pantoate from 3-methyl-2-oxobutanoate: step 1/2. In terms of biological role, catalyzes the reversible reaction in which hydroxymethyl group from 5,10-methylenetetrahydrofolate is transferred onto alpha-ketoisovalerate to form ketopantoate. This is 3-methyl-2-oxobutanoate hydroxymethyltransferase from Bacillus pumilus (strain SAFR-032).